The following is a 145-amino-acid chain: Peptide methionine sulfoxide reductase MsrB (145 aa).

Residues 4–127 (SEELKQRIGD…NSAALKFIPY (124 aa)) enclose the MsrB domain. Residue C116 is the Nucleophile of the active site.

Belongs to the MsrB Met sulfoxide reductase family.

The catalysed reaction is L-methionyl-[protein] + [thioredoxin]-disulfide + H2O = L-methionyl-(R)-S-oxide-[protein] + [thioredoxin]-dithiol. This chain is Peptide methionine sulfoxide reductase MsrB, found in Streptococcus pyogenes serotype M6 (strain ATCC BAA-946 / MGAS10394).